The sequence spans 1172 residues: DNA-directed RNA polymerase subunit beta (1172 aa).

This sequence belongs to the RNA polymerase beta chain family. As to quaternary structure, the RNAP catalytic core consists of 2 alpha, 1 beta, 1 beta' and 1 omega subunit. When a sigma factor is associated with the core the holoenzyme is formed, which can initiate transcription.

It catalyses the reaction RNA(n) + a ribonucleoside 5'-triphosphate = RNA(n+1) + diphosphate. Functionally, DNA-dependent RNA polymerase catalyzes the transcription of DNA into RNA using the four ribonucleoside triphosphates as substrates. This Mycobacterium sp. (strain JLS) protein is DNA-directed RNA polymerase subunit beta.